The chain runs to 376 residues: Putative F-box only protein 9 (376 aa).

Positions 1–44 (MSDLPPDLVEDILSRVPATSLKRLRFTCKQWNSLFKNRRFTEKH) constitute an F-box domain.

In Arabidopsis thaliana (Mouse-ear cress), this protein is Putative F-box only protein 9 (FBX9).